We begin with the raw amino-acid sequence, 135 residues long: Transcription antitermination protein NusB (135 aa).

This sequence belongs to the NusB family.

Its function is as follows. Involved in transcription antitermination. Required for transcription of ribosomal RNA (rRNA) genes. Binds specifically to the boxA antiterminator sequence of the ribosomal RNA (rrn) operons. This chain is Transcription antitermination protein NusB, found in Wolinella succinogenes (strain ATCC 29543 / DSM 1740 / CCUG 13145 / JCM 31913 / LMG 7466 / NCTC 11488 / FDC 602W) (Vibrio succinogenes).